The primary structure comprises 658 residues: Secretin XcpQ (658 aa).

The first 34 residues, 1 to 34, serve as a signal peptide directing secretion; sequence MSQPLLRALFAPSSRSYVPAVLLSLALGIQAAHA. Positions 51 to 141 are N0; the sequence is AHWTINLKDA…TEAGGGQSAP (91 aa). The tract at residues 142–205 is N1; the sequence is DRLETRVIQV…DVIRQLDQKG (64 aa). The tract at residues 206–279 is N2; the sequence is SHDYSVINLR…SLDTPTARSA (74 aa). The N3 stretch occupies residues 280–365; sequence NTRVIRLRHN…VPRAQVLVEA (86 aa). Residues 302–322 form a disordered region; it reads SEGMKNNGGQGGEQTGGGRPS. Gly residues predominate over residues 307–320; that stretch reads NNGGQGGEQTGGGR. Positions 368–606 are secretin; that stretch reads VEISGDIQDA…VFLRPTVVRD (239 aa). The interval 608–658 is s domain; that stretch reads AGLAALSGKKYSDIRVIDGTRGPEGRPSILPTNANQLFDGQAVDLRELMTE.

It belongs to the bacterial secretin family. GSP D subfamily. In terms of assembly, forms a cylindrical channel with 15 subunits. The closed pentadecameric channel is 170 Angstroms long and 140 Angstroms in diameter.

The protein resides in the cell outer membrane. In terms of biological role, involved in a type II secretion system (T2SS, formerly general secretion pathway, GSP) for the export of proteins. This subunit forms the outer membrane channel. Among its substrates are PrpL, elastase LasB, chitin binding protein D (CbpD), aminopeptidase PaAP, and metalloprotease ImpA. The sequence is that of Secretin XcpQ from Pseudomonas aeruginosa (strain ATCC 15692 / DSM 22644 / CIP 104116 / JCM 14847 / LMG 12228 / 1C / PRS 101 / PAO1).